The primary structure comprises 217 residues: Phosphoenolpyruvate guanylyltransferase (217 aa).

Phosphoenolpyruvate-binding residues include T150, G165, and S168.

The protein belongs to the CofC family.

It catalyses the reaction phosphoenolpyruvate + GTP + H(+) = enolpyruvoyl-2-diphospho-5'-guanosine + diphosphate. It participates in cofactor biosynthesis; coenzyme F420 biosynthesis. Its function is as follows. Guanylyltransferase that catalyzes the activation of phosphoenolpyruvate (PEP) as enolpyruvoyl-2-diphospho-5'-guanosine, via the condensation of PEP with GTP. It is involved in the biosynthesis of coenzyme F420, a hydride carrier cofactor. The polypeptide is Phosphoenolpyruvate guanylyltransferase (Mycobacterium marinum (strain ATCC BAA-535 / M)).